The chain runs to 239 residues: MTANADFYEATYAVPMHCTDCTDDIKKCLNGITGIKDLQFDISQQMMSVNSCVAPSVIINALRDCGRDAIIRGAGKPNSSAVAILETFEDVDLKKDTAVRGLARIVQVSDQKTLFDVTVNGVPFSGKYQAKIHSNGNISEGVKSTGDVYYKFEEPIECSDASDLDKSLYSGQNFVSAPLPIWDLIGRSFVIFREGEPAYDIAGVIARSAGVWENDKQVCACTGKTVWEERKDALKNNIK.

One can recognise an HMA domain in the interval F7–I70. Residues C18 and C21 each contribute to the Cu cation site. A disulfide bond links C28 and C65. Residue D163 coordinates Zn(2+). Cu cation contacts are provided by C219 and C221.

Belongs to the CCS1 family. Cu(2+) serves as cofactor.

Its subcellular location is the cytoplasm. Functionally, copper chaperone for superoxide dismutase 1 (SOD1). Binds copper ions and delivers them specifically to SOD1. The chain is Superoxide dismutase 1 copper chaperone (CCS1) from Candida glabrata (strain ATCC 2001 / BCRC 20586 / JCM 3761 / NBRC 0622 / NRRL Y-65 / CBS 138) (Yeast).